The following is a 739-amino-acid chain: Cleavage and polyadenylation specificity factor subunit 2 (739 aa).

The segment covering 411-423 (VKEEETKASHGSD) has biased composition (basic and acidic residues). Positions 411–430 (VKEEETKASHGSDDNSSEPM) are disordered.

The protein belongs to the metallo-beta-lactamase superfamily. RNA-metabolizing metallo-beta-lactamase-like family. CPSF2/YSH1 subfamily. In terms of assembly, component of the CPSF complex, at least composed of CPSF160, CPSF100, CPSF73-I, CPSF73-II, CPSF30, FY and FIPS5. Forms a complex with cleavage and polyadenylation specificity factor (CPSF) subunits FY, PAPS2, CSTF50, CPSF30, CPSF73-I, CPSF73-II and CPSF160.

It localises to the nucleus. It is found in the cytoplasm. In terms of biological role, CPSF plays a key role in pre-mRNA 3'-end formation, recognizing the AAUAAA signal sequence and interacting with poly(A)polymerase and other factors to bring about cleavage and poly(A) addition. Required for antisense-RNA-mediated gene silencing. The chain is Cleavage and polyadenylation specificity factor subunit 2 (CPSF100) from Arabidopsis thaliana (Mouse-ear cress).